The sequence spans 896 residues: UPF0182 protein GM21_2279 (896 aa).

A run of 7 helical transmembrane segments spans residues 6–26 (MTFI…LLSF), 46–66 (VYAQ…FLQL), 99–119 (LVRP…GNWG), 158–180 (LLKS…AYYV), 201–221 (LAVL…LESF), 245–265 (TLRI…LGIW), and 271–291 (LALG…RVYP).

Belongs to the UPF0182 family.

It is found in the cell membrane. This chain is UPF0182 protein GM21_2279, found in Geobacter sp. (strain M21).